Reading from the N-terminus, the 438-residue chain is Glycogen synthase (438 aa).

ADP-alpha-D-glucose is bound at residue lysine 16.

This sequence belongs to the glycosyltransferase 1 family. Bacterial/plant glycogen synthase subfamily.

It catalyses the reaction [(1-&gt;4)-alpha-D-glucosyl](n) + ADP-alpha-D-glucose = [(1-&gt;4)-alpha-D-glucosyl](n+1) + ADP + H(+). Its pathway is glycan biosynthesis; glycogen biosynthesis. Synthesizes alpha-1,4-glucan chains using ADP-glucose. This chain is Glycogen synthase, found in Thermus caldophilus.